The following is a 435-amino-acid chain: Hyaluronidase-1 (435 aa).

An N-terminal signal peptide occupies residues 1-21; it reads MAAHLLPICALFLTLLDMAQG. 2 disulfides stabilise this stretch: C43/C333 and C207/C221. The N-linked (GlcNAc...) asparagine glycan is linked to N99. E131 acts as the Proton donor in catalysis. N-linked (GlcNAc...) asparagine glycosylation is found at N216 and N350. In terms of domain architecture, EGF-like spans 354 to 430; the sequence is GALLCSQALC…YPGWQAPWCE (77 aa). Cystine bridges form between C358–C369, C363–C418, and C420–C429.

Belongs to the glycosyl hydrolase 56 family. As to expression, highly expressed in the liver, kidney and heart. Weakly expressed in lung, placenta and skeletal muscle. No expression detected in adult brain. Isoform 1 is expressed only in bladder and prostate cancer cells, G2/G3 bladder tumor tissues and lymph node specimens showing tumor invasive tumors cells. Isoform 3, isoform 4, isoform 5 and isoform 6 are expressed in normal bladder and bladder tumor tissues.

The protein localises to the secreted. Its subcellular location is the lysosome. It catalyses the reaction Random hydrolysis of (1-&gt;4)-linkages between N-acetyl-beta-D-glucosamine and D-glucuronate residues in hyaluronate.. In terms of biological role, may have a role in promoting tumor progression. May block the TGFB1-enhanced cell growth. The chain is Hyaluronidase-1 (HYAL1) from Homo sapiens (Human).